The following is a 241-amino-acid chain: NAD(P)H-hydrate epimerase (241 aa).

One can recognise a YjeF N-terminal domain in the interval A11–C221. Residue N65 to D69 coordinates (6S)-NADPHX. K(+)-binding residues include N66 and D127. Residues G131–P137 and D160 contribute to the (6S)-NADPHX site. A K(+)-binding site is contributed by S163.

Belongs to the NnrE/AIBP family. The cofactor is K(+).

It localises to the cytoplasm. The protein resides in the mitochondrion. The enzyme catalyses (6R)-NADHX = (6S)-NADHX. It carries out the reaction (6R)-NADPHX = (6S)-NADPHX. In terms of biological role, catalyzes the epimerization of the S- and R-forms of NAD(P)HX, a damaged form of NAD(P)H that is a result of enzymatic or heat-dependent hydration. This is a prerequisite for the S-specific NAD(P)H-hydrate dehydratase to allow the repair of both epimers of NAD(P)HX. In Aspergillus fumigatus (strain ATCC MYA-4609 / CBS 101355 / FGSC A1100 / Af293) (Neosartorya fumigata), this protein is NAD(P)H-hydrate epimerase.